Consider the following 236-residue polypeptide: 2,3,4,5-tetrahydropyridine-2,6-dicarboxylate N-acetyltransferase (236 aa).

This sequence belongs to the transferase hexapeptide repeat family. DapH subfamily.

It carries out the reaction (S)-2,3,4,5-tetrahydrodipicolinate + acetyl-CoA + H2O = L-2-acetamido-6-oxoheptanedioate + CoA. It participates in amino-acid biosynthesis; L-lysine biosynthesis via DAP pathway; LL-2,6-diaminopimelate from (S)-tetrahydrodipicolinate (acetylase route): step 1/3. Functionally, catalyzes the transfer of an acetyl group from acetyl-CoA to tetrahydrodipicolinate. The sequence is that of 2,3,4,5-tetrahydropyridine-2,6-dicarboxylate N-acetyltransferase from Clostridium botulinum (strain Eklund 17B / Type B).